The following is a 379-amino-acid chain: Probable tRNA sulfurtransferase (379 aa).

Positions D52–I157 constitute a THUMP domain. ATP contacts are provided by residues L175–L176, R257, G279, and Q288.

This sequence belongs to the ThiI family.

It localises to the cytoplasm. The catalysed reaction is [ThiI sulfur-carrier protein]-S-sulfanyl-L-cysteine + a uridine in tRNA + 2 reduced [2Fe-2S]-[ferredoxin] + ATP + H(+) = [ThiI sulfur-carrier protein]-L-cysteine + a 4-thiouridine in tRNA + 2 oxidized [2Fe-2S]-[ferredoxin] + AMP + diphosphate. The enzyme catalyses [ThiS sulfur-carrier protein]-C-terminal Gly-Gly-AMP + S-sulfanyl-L-cysteinyl-[cysteine desulfurase] + AH2 = [ThiS sulfur-carrier protein]-C-terminal-Gly-aminoethanethioate + L-cysteinyl-[cysteine desulfurase] + A + AMP + 2 H(+). It functions in the pathway cofactor biosynthesis; thiamine diphosphate biosynthesis. Functionally, catalyzes the ATP-dependent transfer of a sulfur to tRNA to produce 4-thiouridine in position 8 of tRNAs, which functions as a near-UV photosensor. Also catalyzes the transfer of sulfur to the sulfur carrier protein ThiS, forming ThiS-thiocarboxylate. This is a step in the synthesis of thiazole, in the thiamine biosynthesis pathway. The sulfur is donated as persulfide by IscS. The sequence is that of Probable tRNA sulfurtransferase from Mycoplasmopsis pulmonis (strain UAB CTIP) (Mycoplasma pulmonis).